The following is a 269-amino-acid chain: Ribosomal RNA large subunit methyltransferase E (269 aa).

S-adenosyl-L-methionine contacts are provided by Gly-58, Trp-60, Asp-78, Asp-96, and Asp-120. Lys-160 functions as the Proton acceptor in the catalytic mechanism. Positions 234–269 are disordered; it reads HEKKEGNETSDNDEDNNKNGLMIKKIKELRGKRSKL. Over residues 258–269 the composition is skewed to basic and acidic residues; sequence KIKELRGKRSKL.

It belongs to the class I-like SAM-binding methyltransferase superfamily. RNA methyltransferase RlmE family.

The protein resides in the cytoplasm. It carries out the reaction uridine(2552) in 23S rRNA + S-adenosyl-L-methionine = 2'-O-methyluridine(2552) in 23S rRNA + S-adenosyl-L-homocysteine + H(+). Functionally, specifically methylates the uridine in position 2552 of 23S rRNA at the 2'-O position of the ribose in the fully assembled 50S ribosomal subunit. The polypeptide is Ribosomal RNA large subunit methyltransferase E (Methanococcus aeolicus (strain ATCC BAA-1280 / DSM 17508 / OCM 812 / Nankai-3)).